Reading from the N-terminus, the 43-residue chain is Protein PsbN (43 aa).

A helical transmembrane segment spans residues 5-27 (TLVAISISRLLVSFTGYALYTAF).

It belongs to the PsbN family.

The protein localises to the plastid. It is found in the chloroplast thylakoid membrane. Functionally, may play a role in photosystem I and II biogenesis. The protein is Protein PsbN of Cycas taitungensis (Prince sago).